A 257-amino-acid chain; its full sequence is NH(3)-dependent NAD(+) synthetase (257 aa).

28 to 35 serves as a coordination point for ATP; sequence GISGGVDS. Asp-34 contacts Mg(2+). Arg-109 is a binding site for deamido-NAD(+). Thr-129 contributes to the ATP binding site. Glu-134 contacts Mg(2+). The deamido-NAD(+) site is built by Lys-142 and Asp-149. ATP is bound by residues Lys-158 and Ser-180. Residue 240–241 coordinates deamido-NAD(+); it reads HK.

Belongs to the NAD synthetase family. As to quaternary structure, homodimer.

The enzyme catalyses deamido-NAD(+) + NH4(+) + ATP = AMP + diphosphate + NAD(+) + H(+). Its pathway is cofactor biosynthesis; NAD(+) biosynthesis; NAD(+) from deamido-NAD(+) (ammonia route): step 1/1. Its function is as follows. Catalyzes the ATP-dependent amidation of deamido-NAD to form NAD. Uses ammonia as a nitrogen source. In Pyrococcus furiosus (strain ATCC 43587 / DSM 3638 / JCM 8422 / Vc1), this protein is NH(3)-dependent NAD(+) synthetase.